The chain runs to 252 residues: RNA-binding protein 2 (252 aa).

Disordered regions lie at residues methionine 1–valine 34 and arginine 232–arginine 252. In terms of domain architecture, RRM spans serine 152–serine 238. Over residues arginine 242–arginine 252 the composition is skewed to gly residues.

In terms of biological role, probable RNA-binding protein. The protein is RNA-binding protein 2 of Medicago truncatula (Barrel medic).